The sequence spans 145 residues: Transcription antitermination protein NusB (145 aa).

It belongs to the NusB family.

In terms of biological role, involved in transcription antitermination. Required for transcription of ribosomal RNA (rRNA) genes. Binds specifically to the boxA antiterminator sequence of the ribosomal RNA (rrn) operons. The sequence is that of Transcription antitermination protein NusB from Burkholderia vietnamiensis (strain G4 / LMG 22486) (Burkholderia cepacia (strain R1808)).